A 548-amino-acid polypeptide reads, in one-letter code: MKKVTAMLFSMAVGLNAVSMAAKAKASEEQETDVLLIGGGIMSATLGTYLRELEPEWSMTMVERLEGVAQESSNGWNNAGTGHSALMELNYTPQNADGSISIEKAVAINEAFQISRQFWAHQVERGVLRTPRSFINTVPHMSFVWGEDNVNFLRARYAALQQSSLFRGMRYSEDHAQIKEWAPLVMEGRDPQQKVAATRTEIGTDVNYGEITRQLIASLQKKSNFSLQLSSEVRALKRNDDNSWTVTVADLKNGTAQNIRAKFVFIGAGGAALKLLQESGIPEAKDYAGFPVGGQFLVSENPDVVNHHLAKVYGKASVGAPPMSVPHIDTRVLDGKRVVLFGPFATFSTKFLKNGSLWDLMSSTTTSNVMPMMHVGLDNFDLVKYLVSQVMLSEEDRFEALKEYYPQAKKEDWRLWQAGQRVQIIKRDADKGGVLRLGTEVVSDQQGTIAALLGASPGASTAAPIMLNLLEKVFGDRVSSPQWQATLKAIVPSYGRKLNGDVAATERELQYTSEVLGLKYDKPQAADSTPKPQLKPQLVQKEVADIAL.

Belongs to the MQO family. Requires FAD as cofactor.

It catalyses the reaction (S)-malate + a quinone = a quinol + oxaloacetate. It functions in the pathway carbohydrate metabolism; tricarboxylic acid cycle; oxaloacetate from (S)-malate (quinone route): step 1/1. The protein is Probable malate:quinone oxidoreductase of Escherichia coli O6:K15:H31 (strain 536 / UPEC).